Consider the following 2957-residue polypeptide: Toxin PAU_02230 (2957 aa).

Positions 949–968 (TSVSPAETAQSTPEPLSDFA) are disordered. The membrane localization domain that interacts with the inner leaflet of the plasma membrane stretch occupies residues 2115-2144 (EWFKHSETGLKGGGPIDDIRKYIARKSAIK). The interval 2115–2449 (EWFKHSETGL…TSTIVTPLAP (335 aa)) is tyrosine glycosyltransferase PaToxG. UDP-N-acetyl-alpha-D-glucosamine contacts are provided by residues 2169-2171 (IWI) and 2259-2260 (SD). The a divalent metal cation site is built by aspartate 2276 and aspartate 2278. The DxDD motif signature appears at 2276-2279 (DIDD). Asparagine 2312 is a binding site for UDP-N-acetyl-alpha-D-glucosamine. The sseI-like deamidase PaToxD stretch occupies residues 2450-2672 (KTEMLPPVPS…NYSVNPTAEN (223 aa)). Active-site for deamidase activity residues include cysteine 2509, histidine 2547, and aspartate 2562. The segment at 2667-2705 (NPTAENLSPPPPPPIPSHGQVPKTVTPPPPPMRSPLSLS) is disordered.

A divalent metal cation is required as a cofactor.

The protein localises to the secreted. It localises to the host cell membrane. It catalyses the reaction L-tyrosyl-[protein] + UDP-N-acetyl-alpha-D-glucosamine = O-(N-acetyl-alpha-D-glucosaminyl)-L-tyrosyl-[protein] + UDP + H(+). The enzyme catalyses L-glutaminyl-[protein] + H2O = L-glutamyl-[protein] + NH4(+). Toxin that acts on host cells by modifying Rho proteins by tyrosine GlcNAcylation and heterotrimeric G alpha proteins by deamidation. Catalyzes the mono-O-GlcNAcylation of small GTPases of the Rho family (RhoA, RhoB, RhoC, Rac1, Rac2, Rac3, Cdc42) in eukaryotic host cells at the conserved tyrosine residue located in the switch I region (Tyr-32/34), using UDP-N-acetylglucosamine (UDP-GlcNAc) as the sugar donor; other GTPases of the Rho, Ras or Rab families are not substrates. Tyrosine glycosylation inhibits Rho activation and prevents interaction with downstream effectors, resulting in actin disassembly, inhibition of phagocytosis, cell rounding, and toxicity toward insects and mammalian cells. Also catalyzes the deamidation of the catalytic glutamine in heterotrimeric G alpha proteins (Gi, Gq/11), which blocks GTP hydrolysis and arrests the G proteins in a permanent active state leading to activation of Rho GTPases. Thus, PaTox hijacks host GTPase signaling in a bidirectional manner by deamidation-induced activation and glycosylation-induced inactivation of GTPases. The polypeptide is Toxin PAU_02230 (Photorhabdus asymbiotica subsp. asymbiotica (strain ATCC 43949 / 3105-77) (Xenorhabdus luminescens (strain 2))).